The chain runs to 1044 residues: Eukaryotic translation initiation factor 3 subunit A (1044 aa).

The stretch at 92–121 (LKKFIELAEKKVTEAQAKADEIQSSLESAA) forms a coiled coil. The region spanning 339–523 (MTKAASFVLL…GVLTFDTDIF (185 aa)) is the PCI domain. Positions 611–907 (IDKKKEAATD…EARRAARKAG (297 aa)) form a coiled coil. Basic and acidic residues predominate over residues 797-901 (SEKRHEEFEK…QREEEAEARR (105 aa)). The disordered stretch occupies residues 797 to 1044 (SEKRHEEFEK…WVPRWKQQQS (248 aa)). 2 stretches are compositionally biased toward low complexity: residues 943–956 (KEAA…AAPA) and 1006–1017 (SSSSQPPSRTQT).

Belongs to the eIF-3 subunit A family. In terms of assembly, component of the eukaryotic translation initiation factor 3 (eIF-3) complex.

Its subcellular location is the cytoplasm. Its function is as follows. RNA-binding component of the eukaryotic translation initiation factor 3 (eIF-3) complex, which is involved in protein synthesis of a specialized repertoire of mRNAs and, together with other initiation factors, stimulates binding of mRNA and methionyl-tRNAi to the 40S ribosome. The eIF-3 complex specifically targets and initiates translation of a subset of mRNAs involved in cell proliferation. This chain is Eukaryotic translation initiation factor 3 subunit A (tif32), found in Aspergillus clavatus (strain ATCC 1007 / CBS 513.65 / DSM 816 / NCTC 3887 / NRRL 1 / QM 1276 / 107).